Consider the following 520-residue polypeptide: Interferon lambda receptor 1 (520 aa).

The first 20 residues, 1-20 (MAGPERWGPLLLCLLQAAPG), serve as a signal peptide directing secretion. Residues 21-228 (RPRLAPPQNV…LLEVPEANWA (208 aa)) lie on the Extracellular side of the membrane. The region spanning 26–126 (PPQNVTLLSQ…LDYLFEVEPA (101 aa)) is the Fibronectin type-III domain. 2 N-linked (GlcNAc...) asparagine glycosylation sites follow: asparagine 29 and asparagine 36. Disulfide bonds link cysteine 74-cysteine 82 and cysteine 86-cysteine 150. N-linked (GlcNAc...) asparagine glycosylation is found at asparagine 142 and asparagine 169. A disulfide bridge links cysteine 195 with cysteine 217. The chain crosses the membrane as a helical span at residues 229 to 249 (FLVLPSLLILLLVIAAGGVIW). Residues 250–520 (KTLMGNPWFQ…GRTLGHYMAR (271 aa)) lie on the Cytoplasmic side of the membrane. 2 disordered regions span residues 302-439 (VRPT…FLEE) and 477-520 (ESSP…YMAR). The segment covering 323–336 (AEDEEEEDEEDTED) has biased composition (acidic residues). Positions 380 to 392 (SSAWDSSDRSWAS) are enriched in low complexity. The segment covering 479–495 (SPEEEEEARESEIEDSD) has biased composition (acidic residues).

It belongs to the type II cytokine receptor family. Heterodimer with IL10RB. Post-translationally, ubiquitinated by FBXO45-containing E3 ligase leading to proteasomal degradation. As to expression, widely expressed.

It localises to the membrane. In terms of biological role, the IFNLR1/IL10RB dimer is a receptor for the cytokine ligands IFNL2 and IFNL3 and mediates their antiviral activity. The ligand/receptor complex stimulate the activation of the JAK/STAT signaling pathway leading to the expression of IFN-stimulated genes (ISG), which contribute to the antiviral state. Determines the cell type specificity of the lambda interferon action. Shows a more restricted pattern of expression in the epithelial tissues thereby limiting responses to lambda interferons primarily to epithelial cells of the respiratory, gastrointestinal, and reproductive tracts. Seems not to be essential for early virus-activated host defense in vaginal infection, but plays an important role in Toll-like receptor (TLR)-induced antiviral defense. Plays a significant role in the antiviral immune defense in the intestinal epithelium. The protein is Interferon lambda receptor 1 (IFNLR1) of Homo sapiens (Human).